We begin with the raw amino-acid sequence, 359 residues long: Phosphoserine aminotransferase (359 aa).

Arg-42 contributes to the L-glutamate binding site. Residues 76–77 (AS), Trp-102, Thr-151, Asp-170, and Gln-193 contribute to the pyridoxal 5'-phosphate site. An N6-(pyridoxal phosphate)lysine modification is found at Lys-194. Residue 235–236 (NT) coordinates pyridoxal 5'-phosphate.

The protein belongs to the class-V pyridoxal-phosphate-dependent aminotransferase family. SerC subfamily. Homodimer. Requires pyridoxal 5'-phosphate as cofactor.

The protein resides in the cytoplasm. It carries out the reaction O-phospho-L-serine + 2-oxoglutarate = 3-phosphooxypyruvate + L-glutamate. The catalysed reaction is 4-(phosphooxy)-L-threonine + 2-oxoglutarate = (R)-3-hydroxy-2-oxo-4-phosphooxybutanoate + L-glutamate. The protein operates within amino-acid biosynthesis; L-serine biosynthesis; L-serine from 3-phospho-D-glycerate: step 2/3. It functions in the pathway cofactor biosynthesis; pyridoxine 5'-phosphate biosynthesis; pyridoxine 5'-phosphate from D-erythrose 4-phosphate: step 3/5. Its function is as follows. Catalyzes the reversible conversion of 3-phosphohydroxypyruvate to phosphoserine and of 3-hydroxy-2-oxo-4-phosphonooxybutanoate to phosphohydroxythreonine. This Bacillus subtilis (strain 168) protein is Phosphoserine aminotransferase (serC).